The chain runs to 152 residues: Transcriptional repressor NrdR (152 aa).

The segment at 3–34 is a zinc-finger region; sequence CPFCSTEETKVIDSRLVSEGYQVRRRRECTNC. Positions 49 to 139 constitute an ATP-cone domain; sequence PKIVKTDGYR…VYLSFENINE (91 aa).

This sequence belongs to the NrdR family. The cofactor is Zn(2+).

In terms of biological role, negatively regulates transcription of bacterial ribonucleotide reductase nrd genes and operons by binding to NrdR-boxes. The sequence is that of Transcriptional repressor NrdR from Actinobacillus succinogenes (strain ATCC 55618 / DSM 22257 / CCUG 43843 / 130Z).